Consider the following 124-residue polypeptide: Small ribosomal subunit protein uS12cz/uS12cy (124 aa).

It belongs to the universal ribosomal protein uS12 family. In terms of assembly, part of the 30S ribosomal subunit.

It is found in the plastid. Functionally, with S4 and S5 plays an important role in translational accuracy. Located at the interface of the 30S and 50S subunits. This Epifagus virginiana (Beechdrops) protein is Small ribosomal subunit protein uS12cz/uS12cy (rps12-A).